The following is a 274-amino-acid chain: NH(3)-dependent NAD(+) synthetase (274 aa).

Position 46–53 (46–53 (GISGGQDS)) interacts with ATP. Residue D52 participates in Mg(2+) binding. Position 140 (R140) interacts with deamido-NAD(+). ATP is bound at residue T160. E165 contributes to the Mg(2+) binding site. Deamido-NAD(+) is bound by residues K173 and D180. Residues K189 and T211 each contribute to the ATP site. 260 to 261 (HK) is a deamido-NAD(+) binding site.

The protein belongs to the NAD synthetase family. In terms of assembly, homodimer.

The enzyme catalyses deamido-NAD(+) + NH4(+) + ATP = AMP + diphosphate + NAD(+) + H(+). It participates in cofactor biosynthesis; NAD(+) biosynthesis; NAD(+) from deamido-NAD(+) (ammonia route): step 1/1. Its function is as follows. Catalyzes the ATP-dependent amidation of deamido-NAD to form NAD. Uses ammonia as a nitrogen source. This Streptococcus pyogenes serotype M18 (strain MGAS8232) protein is NH(3)-dependent NAD(+) synthetase.